A 262-amino-acid polypeptide reads, in one-letter code: Phosphatidylglycerol--prolipoprotein diacylglyceryl transferase (262 aa).

3 helical membrane passes run 17 to 37 (LKVHWYGLMYVIGIAATWILA), 57 to 77 (LVFYAAIGVVVGGRLGYALFY), and 92 to 112 (IWEGGMAFHGGLIGVLIAMYA). Residue R140 coordinates a 1,2-diacyl-sn-glycero-3-phospho-(1'-sn-glycerol). The next 2 membrane-spanning stretches (helical) occupy residues 200 to 220 (MAVSGLFLLGYGVFRFAVEFV) and 234 to 254 (WLTMGQILCLPMILFGIVLLA).

This sequence belongs to the Lgt family.

The protein localises to the cell inner membrane. It catalyses the reaction L-cysteinyl-[prolipoprotein] + a 1,2-diacyl-sn-glycero-3-phospho-(1'-sn-glycerol) = an S-1,2-diacyl-sn-glyceryl-L-cysteinyl-[prolipoprotein] + sn-glycerol 1-phosphate + H(+). It participates in protein modification; lipoprotein biosynthesis (diacylglyceryl transfer). Catalyzes the transfer of the diacylglyceryl group from phosphatidylglycerol to the sulfhydryl group of the N-terminal cysteine of a prolipoprotein, the first step in the formation of mature lipoproteins. The chain is Phosphatidylglycerol--prolipoprotein diacylglyceryl transferase from Methylococcus capsulatus (strain ATCC 33009 / NCIMB 11132 / Bath).